The primary structure comprises 555 residues: Formate--tetrahydrofolate ligase (555 aa).

64–71 (TKAGIGKT) serves as a coordination point for ATP.

It belongs to the formate--tetrahydrofolate ligase family.

The catalysed reaction is (6S)-5,6,7,8-tetrahydrofolate + formate + ATP = (6R)-10-formyltetrahydrofolate + ADP + phosphate. It participates in one-carbon metabolism; tetrahydrofolate interconversion. In Bacteroides thetaiotaomicron (strain ATCC 29148 / DSM 2079 / JCM 5827 / CCUG 10774 / NCTC 10582 / VPI-5482 / E50), this protein is Formate--tetrahydrofolate ligase.